The sequence spans 121 residues: MMAPQTTRNDPRQRGQEAEERARAYLEGQGLQTLARNFRTRRGEIDLIMADGGVTVFVEVRRRSHPGYGGATASVDRRKRQRLSRAASAWLARHPGWARFDVVATDGHEVHWVRDAFREES.

A disordered region spans residues 1 to 20; it reads MMAPQTTRNDPRQRGQEAEE. The span at 9 to 20 shows a compositional bias: basic and acidic residues; the sequence is NDPRQRGQEAEE.

This sequence belongs to the UPF0102 family.

In Halorhodospira halophila (strain DSM 244 / SL1) (Ectothiorhodospira halophila (strain DSM 244 / SL1)), this protein is UPF0102 protein Hhal_2103.